The sequence spans 314 residues: Cyclic di-GMP binding protein TDE_0214 (314 aa).

One can recognise a PilZ domain in the interval 146 to 234; that stretch reads QKRRNERVVI…KTVRTEPVEG (89 aa). A compositionally biased stretch (polar residues) spans 288–300; the sequence is TPVSSPIGTNTAP. The tract at residues 288–314 is disordered; the sequence is TPVSSPIGTNTAPLTPPPADSAPEQIS.

In terms of biological role, cyclic-di-GMP binding protein that plays important roles in motility, chemotaxis, biofilm formation and virulence. This chain is Cyclic di-GMP binding protein TDE_0214, found in Treponema denticola (strain ATCC 35405 / DSM 14222 / CIP 103919 / JCM 8153 / KCTC 15104).